We begin with the raw amino-acid sequence, 876 residues long: Valine--tRNA ligase (876 aa).

Residues 43-53 (PNVTGVLHMGH) carry the 'HIGH' region motif. The 'KMSKS' region motif lies at 533-537 (KMSKS). Lys536 contacts ATP. Residues 804–876 (GALIDVEEEI…DSLNQLQSTK (73 aa)) adopt a coiled-coil conformation.

This sequence belongs to the class-I aminoacyl-tRNA synthetase family. ValS type 1 subfamily. As to quaternary structure, monomer.

It is found in the cytoplasm. The catalysed reaction is tRNA(Val) + L-valine + ATP = L-valyl-tRNA(Val) + AMP + diphosphate. Its function is as follows. Catalyzes the attachment of valine to tRNA(Val). As ValRS can inadvertently accommodate and process structurally similar amino acids such as threonine, to avoid such errors, it has a 'posttransfer' editing activity that hydrolyzes mischarged Thr-tRNA(Val) in a tRNA-dependent manner. The protein is Valine--tRNA ligase of Porphyromonas gingivalis (strain ATCC 33277 / DSM 20709 / CIP 103683 / JCM 12257 / NCTC 11834 / 2561).